Reading from the N-terminus, the 455-residue chain is ATP-dependent protease ATPase subunit HslU (455 aa).

ATP contacts are provided by residues valine 23, 65-70 (GVGKTE), aspartate 266, glutamate 333, and arginine 405.

This sequence belongs to the ClpX chaperone family. HslU subfamily. In terms of assembly, a double ring-shaped homohexamer of HslV is capped on each side by a ring-shaped HslU homohexamer. The assembly of the HslU/HslV complex is dependent on binding of ATP.

The protein localises to the cytoplasm. Functionally, ATPase subunit of a proteasome-like degradation complex; this subunit has chaperone activity. The binding of ATP and its subsequent hydrolysis by HslU are essential for unfolding of protein substrates subsequently hydrolyzed by HslV. HslU recognizes the N-terminal part of its protein substrates and unfolds these before they are guided to HslV for hydrolysis. The sequence is that of ATP-dependent protease ATPase subunit HslU from Xanthomonas campestris pv. campestris (strain 8004).